The primary structure comprises 496 residues: GTPase Der (496 aa).

2 consecutive EngA-type G domains span residues 3–168 and 210–383; these read PIIA…VPEK and IKLA…DCST. Residues 9 to 16, 56 to 60, 120 to 123, 216 to 223, 263 to 267, and 328 to 331 each bind GTP; these read GRPNVGKS, DTGGI, NKID, DTAGV, and NKWD. Residues 384 to 468 enclose the KH-like domain; that stretch reads KRINTSLLTR…PIRIQFKESE (85 aa).

It belongs to the TRAFAC class TrmE-Era-EngA-EngB-Septin-like GTPase superfamily. EngA (Der) GTPase family. Associates with the 50S ribosomal subunit.

GTPase that plays an essential role in the late steps of ribosome biogenesis. This chain is GTPase Der, found in Hamiltonella defensa subsp. Acyrthosiphon pisum (strain 5AT).